The sequence spans 422 residues: MAMVVSSWRDPQDDVAGGNPGGPNPAAQAARGGGGGAGEQQQAGSGAPHTPQTPGQPGAPATPGTQGDKGQGPPGSGQSQQHIECVVCGDKSSGKHYGQFTCEGCKSFFKRSVRRNLTYTCRANRNCPIDQHHRNQCQYCRLKKCLKVGMRREAVQRGRMPPTQPNPGQYALTNGDPLNGHCYLSGYISLLLRAEPYPTSRYGSQCMQPNNIMGIENICELAARLLFSAVEWARNIPFFPDLQITDQVSLLRLTWSELFVLNAAQCSMPLHVAPLLAAAGLHASPMSADRVVAFMDHIRIFQEQVEKLKALHVDSAEYSCLKAIVLFTSDACGLSDAAHIESLQEKSQCALEEYVRSQYPNQPSRFGKLLLRLPSLRTVSSSVIEQLFFVRLVGKTPIETLIRDMLLSGSSFNWPYMSIQCS.

A disordered region spans residues 1–80 (MAMVVSSWRD…QGPPGSGQSQ (80 aa)). Residues 39–66 (EQQQAGSGAPHTPQTPGQPGAPATPGTQ) show a composition bias toward low complexity. A DNA-binding region (nuclear receptor) is located at residues 82 to 157 (HIECVVCGDK…VGMRREAVQR (76 aa)). 2 NR C4-type zinc fingers span residues 85-105 (CVVC…CEGC) and 121-145 (CRAN…LKKC). The NR LBD domain maps to 183–409 (YLSGYISLLL…TLIRDMLLSG (227 aa)). The interval 343 to 422 (LQEKSQCALE…NWPYMSIQCS (80 aa)) is important for dimerization.

It belongs to the nuclear hormone receptor family. NR2 subfamily. Binds DNA as dimer; homodimer and probable heterodimer with NR2F6. Interacts with GTF2B; this interaction is direct. Interacts with COPS2.

The protein localises to the nucleus. Its function is as follows. Coup (chicken ovalbumin upstream promoter) transcription factor binds to the ovalbumin promoter and, in conjunction with another protein (S300-II) stimulates initiation of transcription. Binds to both direct repeats and palindromes of the 5'-AGGTCA-3' motif. Represses transcriptional activity of LHCG. This is COUP transcription factor 1 (Nr2f1) from Mus musculus (Mouse).